We begin with the raw amino-acid sequence, 916 residues long: Beta-scruin (916 aa).

Kelch repeat units lie at residues 82-133 (AVLI…YFHG), 134-187 (KVYL…IMDE), 188-235 (RIFV…NNEG), 237-289 (IYVV…TQNK), 291-341 (IWIW…KAGT), and 342-390 (QVFI…GIPV). The tract at residues 393 to 426 (SPASDITTSKTTRSGSRKTQKTLKDKQQSDIHAR) is disordered. Residues 414 to 425 (TLKDKQQSDIHA) show a composition bias toward basic and acidic residues. Kelch repeat units lie at residues 586-637 (VIIA…YYRG), 638-691 (AIYV…VFND), 692-739 (SIYV…SHGG), 741-793 (LWVM…VCDD), 795-847 (IWLC…ALES), and 849-896 (LYLI…TIPP).

Sperm.

May have an enzymatic role. Found the acrosomal vesicle at the anterior of sperm but not in the acrosomal process. This Limulus polyphemus (Atlantic horseshoe crab) protein is Beta-scruin.